The following is a 333-amino-acid chain: MKKYLLYASLLTSVLLFSCSKNNPSEPVEDRSIEISIRVDDFTKTGETVRYERNQGSAAERLITNLYLLLFDQSGANPAKYYIAGNTFSGGIWLPDDMKVKLDMTQSEAGERKVYVVANVDNAVKTALDAVANESDLQTVKRTTAMPWSTDIASPFLMSGNKTHDFLANRLLDNVPLVRAIAKVELNISLSEKFQIVPIIVNGSLSEFKFRYVNFDKETYVVKPTTKPDNLISSANGVWPQITDWTVWGASLNTSPAPDAGTGYTLDANGKVTALRIVTYLNERDSKGATVEVALPRVDDGTLPPPEFGPELYRLPLPDKILRNHWYKYEVEI.

An N-terminal signal peptide occupies residues 1–18; that stretch reads MKKYLLYASLLTSVLLFS. C19 is lipidated: N-palmitoyl cysteine. Residue C19 is the site of S-diacylglycerol cysteine attachment. Positions 19–53 are excised as a propeptide; the sequence is CSKNNPSEPVEDRSIEISIRVDDFTKTGETVRYER.

Belongs to the bacteroidetes fimbrillin superfamily. FimA/Mfa1 family. Component of the fimbrium tip. Minor fimbriae are composed of a structural subunit, most often Mfa1, and the accessory subunits Mfa3, Mfa4 and Mfa5. Mfa4 is required for Mfa3 and Mfa5 insertion into the fimbrium. Fimbrium assembly occurs by linear, head-to-tail oligomerization of fimbrial subunits. This is mediated via insertion of a C-terminal beta-strand from one subunit into a groove in the N-terminal domain of the following subunit.

The protein localises to the fimbrium. It localises to the cell outer membrane. Functionally, tip subunit of the minor fimbriae. These filamentous pili are attached to the cell surface; they mediate biofilm formation, adhesion onto host cells and onto other bacteria that are part of the oral microbiome. They play an important role in invasion of periodontal tissues and are recognized as major virulence factors. The sequence is that of Minor fimbrium tip subunit MfA4 from Porphyromonas gingivalis (strain ATCC 33277 / DSM 20709 / CIP 103683 / JCM 12257 / NCTC 11834 / 2561).